We begin with the raw amino-acid sequence, 471 residues long: Tryptophanase (471 aa).

3 positions are modified to N6-acetyllysine: K5, K115, and K156. N6-(pyridoxal phosphate)lysine is present on K270. K450 carries the post-translational modification N6-acetyllysine.

Belongs to the beta-eliminating lyase family. In terms of assembly, homotetramer. Pyridoxal 5'-phosphate is required as a cofactor.

It catalyses the reaction L-tryptophan + H2O = indole + pyruvate + NH4(+). It participates in amino-acid degradation; L-tryptophan degradation via pyruvate pathway; indole and pyruvate from L-tryptophan: step 1/1. This chain is Tryptophanase, found in Escherichia fergusonii (strain ATCC 35469 / DSM 13698 / CCUG 18766 / IAM 14443 / JCM 21226 / LMG 7866 / NBRC 102419 / NCTC 12128 / CDC 0568-73).